Here is an 851-residue protein sequence, read N- to C-terminus: Phosphatidate phosphatase LPIN3 (851 aa).

The N-LIP stretch occupies residues 1–108 (MNYVGQLAET…VPPGLCTSPI (108 aa)). Disordered stretches follow at residues 114–385 (SGFP…YLDD) and 400–432 (QSDSGLGARRWSEPSSQKSLRDPNPEHEPEPTL). Basic residues predominate over residues 140–151 (GRRKRRRRRKPK). Residues 141 to 148 (RRKRRRRR) carry the Nuclear localization signal motif. Thr-159 carries the post-translational modification Phosphothreonine. Ser-161, Ser-162, and Ser-224 each carry phosphoserine. Residues 268–286 (GRAGATSPPRGGPSTPSTS) show a composition bias toward low complexity. A compositionally biased stretch (basic and acidic residues) spans 418–429 (SLRDPNPEHEPE). Ser-463 carries the post-translational modification Phosphoserine. Residues 542–559 (SAQKEKTAAKEQQGEKTE) are compositionally biased toward basic and acidic residues. A disordered region spans residues 542–591 (SAQKEKTAAKEQQGEKTEVLSSDDDAPDSPVILEIPSLPPSTPPSTPTYK). The span at 578–587 (SLPPSTPPST) shows a compositional bias: pro residues. Residues 590–792 (YKKSLRLSSD…RIFTVNPRGE (203 aa)) form a C-LIP region. Residues 644 to 648 (DIDGT) carry the DXDXT motif motif. Positions 655-659 (LGHIL) match the LXXIL motif motif.

The protein belongs to the lipin family. Requires Mg(2+) as cofactor. Significant expression in intestine and other regions of the gastrointestinal tract.

It localises to the nucleus. The catalysed reaction is a 1,2-diacyl-sn-glycero-3-phosphate + H2O = a 1,2-diacyl-sn-glycerol + phosphate. Its activity is regulated as follows. Inhibited by N-ethylmaleimide. Magnesium-dependent phosphatidate phosphatase enzyme which catalyzes the conversion of phosphatidic acid to diacylglycerol during triglyceride, phosphatidylcholine and phosphatidylethanolamine biosynthesis therefore regulates fatty acid metabolism. The polypeptide is Phosphatidate phosphatase LPIN3 (Homo sapiens (Human)).